The chain runs to 493 residues: Protein nucleotidyltransferase YdiU (493 aa).

ATP-binding residues include Gly94, Gly96, Arg97, Lys117, Asp129, Gly130, Arg180, and Arg187. The active-site Proton acceptor is the Asp256. Positions 257 and 266 each coordinate Mg(2+). ATP is bound at residue Asp266.

This sequence belongs to the SELO family. Mg(2+) serves as cofactor. The cofactor is Mn(2+).

The enzyme catalyses L-seryl-[protein] + ATP = 3-O-(5'-adenylyl)-L-seryl-[protein] + diphosphate. It catalyses the reaction L-threonyl-[protein] + ATP = 3-O-(5'-adenylyl)-L-threonyl-[protein] + diphosphate. The catalysed reaction is L-tyrosyl-[protein] + ATP = O-(5'-adenylyl)-L-tyrosyl-[protein] + diphosphate. It carries out the reaction L-histidyl-[protein] + UTP = N(tele)-(5'-uridylyl)-L-histidyl-[protein] + diphosphate. The enzyme catalyses L-seryl-[protein] + UTP = O-(5'-uridylyl)-L-seryl-[protein] + diphosphate. It catalyses the reaction L-tyrosyl-[protein] + UTP = O-(5'-uridylyl)-L-tyrosyl-[protein] + diphosphate. Nucleotidyltransferase involved in the post-translational modification of proteins. It can catalyze the addition of adenosine monophosphate (AMP) or uridine monophosphate (UMP) to a protein, resulting in modifications known as AMPylation and UMPylation. The chain is Protein nucleotidyltransferase YdiU from Hahella chejuensis (strain KCTC 2396).